Reading from the N-terminus, the 488-residue chain is R3H and coiled-coil domain-containing protein 1 (488 aa).

In terms of domain architecture, R3H spans 16–81 (NDFVHRVQEE…KRRTVICHLD (66 aa)). Disordered stretches follow at residues 87–180 (SDGP…GDAE) and 195–322 (KSPD…DADH). Low complexity predominate over residues 114-125 (GAAAGPRGAPAG). Serine 232 is subject to Phosphoserine. Residues 244 to 321 (SHGMRSLVDQ…EEDEDEADAD (78 aa)) are a coiled coil. Residues 252–265 (DQEEEEIEGEEEEK) are compositionally biased toward acidic residues. Basic and acidic residues-rich tracts occupy residues 266-280 (VDEKEEDTGKQKERV) and 287-301 (TDAQEGKVDSEGERM). Acidic residues predominate over residues 302–319 (DEGEDKVDAEEEDEDEAD).

This Mus musculus (Mouse) protein is R3H and coiled-coil domain-containing protein 1.